Consider the following 342-residue polypeptide: Farnesyl pyrophosphate synthase 2 (342 aa).

Residues Lys-47, Arg-50, and Gln-86 each contribute to the isopentenyl diphosphate site. The Mg(2+) site is built by Asp-93 and Asp-97. Arg-102 is a dimethylallyl diphosphate binding site. An isopentenyl diphosphate-binding site is contributed by Arg-103. 5 residues coordinate dimethylallyl diphosphate: Lys-190, Thr-191, Gln-229, Lys-246, and Lys-255.

It belongs to the FPP/GGPP synthase family. Requires Mg(2+) as cofactor.

Its subcellular location is the cytoplasm. The catalysed reaction is isopentenyl diphosphate + dimethylallyl diphosphate = (2E)-geranyl diphosphate + diphosphate. It carries out the reaction isopentenyl diphosphate + (2E)-geranyl diphosphate = (2E,6E)-farnesyl diphosphate + diphosphate. The protein operates within isoprenoid biosynthesis; farnesyl diphosphate biosynthesis; farnesyl diphosphate from geranyl diphosphate and isopentenyl diphosphate: step 1/1. It functions in the pathway isoprenoid biosynthesis; geranyl diphosphate biosynthesis; geranyl diphosphate from dimethylallyl diphosphate and isopentenyl diphosphate: step 1/1. Its function is as follows. Catalyzes the sequential condensation of isopentenyl pyrophosphate with the allylic pyrophosphates, dimethylallyl pyrophosphate, and then with the resultant geranylpyrophosphate to the ultimate product farnesyl pyrophosphate. The chain is Farnesyl pyrophosphate synthase 2 (FPS2) from Arabidopsis thaliana (Mouse-ear cress).